The following is a 314-amino-acid chain: tRNA dimethylallyltransferase (314 aa).

36–43 is a binding site for ATP; the sequence is GPTASGKT. 38-43 is a binding site for substrate; that stretch reads TASGKT. The tract at residues 61-64 is interaction with substrate tRNA; the sequence is DSVQ.

The protein belongs to the IPP transferase family. Monomer. Requires Mg(2+) as cofactor.

The enzyme catalyses adenosine(37) in tRNA + dimethylallyl diphosphate = N(6)-dimethylallyladenosine(37) in tRNA + diphosphate. Its function is as follows. Catalyzes the transfer of a dimethylallyl group onto the adenine at position 37 in tRNAs that read codons beginning with uridine, leading to the formation of N6-(dimethylallyl)adenosine (i(6)A). The sequence is that of tRNA dimethylallyltransferase from Sorangium cellulosum (strain So ce56) (Polyangium cellulosum (strain So ce56)).